A 137-amino-acid polypeptide reads, in one-letter code: Large ribosomal subunit protein uL16 (137 aa).

Residues 1–17 are compositionally biased toward basic residues; it reads MLQPKRTKFRKTHKGRN. The disordered stretch occupies residues 1–23; that stretch reads MLQPKRTKFRKTHKGRNRGLAQN.

Belongs to the universal ribosomal protein uL16 family. In terms of assembly, part of the 50S ribosomal subunit.

Its function is as follows. Binds 23S rRNA and is also seen to make contacts with the A and possibly P site tRNAs. This is Large ribosomal subunit protein uL16 from Pseudoalteromonas translucida (strain TAC 125).